The chain runs to 181 residues: MIPISESTNTLLFVVLEFAILVGALGVVLLSRVIYSALLLGFVFICVALLYLLLNADFLAAAQVLIYVGAVNVLIVFAIMLVSTPDDVKNKPKTTGEIISAFTFIALFVLLTIMIFTTSWDTHHNLATQDEVLLQPLMSNVQTIGFHLLTDLLFPFELLSLLLLVALVGAITIASKNKITE.

5 consecutive transmembrane segments (helical) span residues 10 to 30 (TLLF…VVLL), 33 to 53 (VIYS…LYLL), 62 to 82 (AQVL…IMLV), 98 to 118 (IISA…IFTT), and 153 to 173 (LFPF…AITI).

It belongs to the complex I subunit 6 family. In terms of assembly, NDH is composed of at least 16 different subunits, 5 of which are encoded in the nucleus.

The protein localises to the plastid. It localises to the chloroplast thylakoid membrane. The catalysed reaction is a plastoquinone + NADH + (n+1) H(+)(in) = a plastoquinol + NAD(+) + n H(+)(out). It carries out the reaction a plastoquinone + NADPH + (n+1) H(+)(in) = a plastoquinol + NADP(+) + n H(+)(out). NDH shuttles electrons from NAD(P)H:plastoquinone, via FMN and iron-sulfur (Fe-S) centers, to quinones in the photosynthetic chain and possibly in a chloroplast respiratory chain. The immediate electron acceptor for the enzyme in this species is believed to be plastoquinone. Couples the redox reaction to proton translocation, and thus conserves the redox energy in a proton gradient. In Zygnema circumcarinatum (Green alga), this protein is NAD(P)H-quinone oxidoreductase subunit 6, chloroplastic (ndhG).